Consider the following 500-residue polypeptide: Chromosomal replication initiator protein DnaA (500 aa).

The interval 1 to 81 is domain I, interacts with DnaA modulators; the sequence is MVNASGDPVI…LQALRTVTGE (81 aa). The domain II stretch occupies residues 81–155; sequence ENMFPAFKVV…QQKMNRDPET (75 aa). A domain III, AAA+ region region spans residues 156-377; the sequence is HLNKNFTFDS…GALTRVTAVA (222 aa). The ATP site is built by Gly200, Gly202, Lys203, and Thr204. The domain IV, binds dsDNA stretch occupies residues 378 to 500; it reads SLSNQPVTRA…TVRLKQSNTN (123 aa).

Belongs to the DnaA family. As to quaternary structure, oligomerizes as a right-handed, spiral filament on DNA at oriC.

The protein resides in the cytoplasm. In terms of biological role, plays an essential role in the initiation and regulation of chromosomal replication. ATP-DnaA binds to the origin of replication (oriC) to initiate formation of the DNA replication initiation complex once per cell cycle. Binds the DnaA box (a 9 base pair repeat at the origin) and separates the double-stranded (ds)DNA. Forms a right-handed helical filament on oriC DNA; dsDNA binds to the exterior of the filament while single-stranded (ss)DNA is stabiized in the filament's interior. The ATP-DnaA-oriC complex binds and stabilizes one strand of the AT-rich DNA unwinding element (DUE), permitting loading of DNA polymerase. After initiation quickly degrades to an ADP-DnaA complex that is not apt for DNA replication. Binds acidic phospholipids. The chain is Chromosomal replication initiator protein DnaA from Bifidobacterium longum subsp. infantis (strain ATCC 15697 / DSM 20088 / JCM 1222 / NCTC 11817 / S12).